A 515-amino-acid chain; its full sequence is Maturase K (515 aa).

The protein belongs to the intron maturase 2 family. MatK subfamily.

Its subcellular location is the plastid. It localises to the chloroplast. Usually encoded in the trnK tRNA gene intron. Probably assists in splicing its own and other chloroplast group II introns. In Pinus clausa (Sand pine), this protein is Maturase K.